The chain runs to 153 residues: Endoribonuclease YbeY (153 aa).

3 residues coordinate Zn(2+): His116, His120, and His126.

Belongs to the endoribonuclease YbeY family. It depends on Zn(2+) as a cofactor.

It is found in the cytoplasm. Its function is as follows. Single strand-specific metallo-endoribonuclease involved in late-stage 70S ribosome quality control and in maturation of the 3' terminus of the 16S rRNA. This Clavibacter sepedonicus (Clavibacter michiganensis subsp. sepedonicus) protein is Endoribonuclease YbeY.